Consider the following 455-residue polypeptide: MGAEEEEEPASAVGREGGGGGGGARAAGAGAGGDTADDDDSGESAAAVVPCSICLDAVVAGGGDRSTARLQCGHEFHLDCIGSAFNAKGVMQCPNCRQIERGNWLYANGSRPSQDVSNDDWGHDEDFYDANQPETSRSVFLPFRFQWCPIGRLAQLPSVFDEGESAPPVTFHDFMGQNFTSEHLPVSAPGATPPGPYIAYFQPLQSSASSSSSHVTERTMDGTTYHDHWNPLPGPSDGRPLATVHPIDFHHNHWTHLPNSYSQPNSNNGVAEQMAIPVVPMRVGGLDSDSQQRGSLPSVYGNGSGSRSRIPSVPPMAPQFMRPHGNINEQYQQNSSSLYAAPQRRTAVQAVQDSMNFTLFPQAPTGPNSMETEDAGGNQFYAWERDRFAPYPLMPVDSEANWWGSTPQSHGVTDHSAAPGRRLFGQWIGAGRSPPPPPPPPADNSSYRQMHIPRM.

The tract at residues 1–42 is disordered; it reads MGAEEEEEPASAVGREGGGGGGGARAAGAGAGGDTADDDDSG. Gly residues predominate over residues 15–33; the sequence is REGGGGGGGARAAGAGAGG. The segment at 51 to 97 adopts an RING-type; atypical zinc-finger fold; sequence CSICLDAVVAGGGDRSTARLQCGHEFHLDCIGSAFNAKGVMQCPNCR. Disordered regions lie at residues 286–311 and 426–455; these read LDSD…SRIP and QWIG…IPRM. A compositionally biased stretch (pro residues) spans 433–442; the sequence is SPPPPPPPPA.

In terms of assembly, interacts with SPL14/IPA1.

The protein localises to the nucleus. It catalyses the reaction S-ubiquitinyl-[E2 ubiquitin-conjugating enzyme]-L-cysteine + [acceptor protein]-L-lysine = [E2 ubiquitin-conjugating enzyme]-L-cysteine + N(6)-ubiquitinyl-[acceptor protein]-L-lysine.. It functions in the pathway protein modification; protein ubiquitination. Its function is as follows. Functions as an E3 ligase that promotes polyubiquitination of SPL14/IPA1 for subsequent proteasomal degradation. Regulates plant architecture by modulating SPL14/IPA1 abundance. Promotes the degradation of SPL14/IPA1 in panicles, while it stabilizes SPL14/IPA1 in shoot apices. Ubiquitinates the SPL14/IPA1-mediated complex with 'Lys-48'-linked polyubiquitin in panicles and 'Lys-63'-linked polyubiquitin chains in the shoot apex. The polypeptide is E3 ubiquitin-protein ligase IPI1 (Oryza sativa subsp. japonica (Rice)).